Reading from the N-terminus, the 319-residue chain is MNINYSELSSSRSLSVIAPAKINLHLEVLGFRKDGFHELAMLMQSINLFDEIDFLKTDNGEITLTSDDPNLSTGDDNLILKAAQLIQTCSSDKNVGAEIHLKKNIPIGAGLAGGSSDAAATLVGLNSLWGIGSSEKQLEKLGSELGSDVPFCLRGGTQFCFGRGESLEMIPEIKQSMAVVLVKDPLVEVSTPWAYSKFKEIYGNDYLKMEEDFEKRRQSLRDASWLNPLNCTNPPPLQNDLQKVIEPITPAVRNALEFLSSLEGVLSLAMSGSGPSCFGIFADLNGAQIALEENRNKLKLSGLDAWCCAFKSSGVSLRL.

The active site involves Lys-21. 106-116 is a binding site for ATP; the sequence is PIGAGLAGGSS. Asp-148 is a catalytic residue.

It belongs to the GHMP kinase family. IspE subfamily.

It carries out the reaction 4-CDP-2-C-methyl-D-erythritol + ATP = 4-CDP-2-C-methyl-D-erythritol 2-phosphate + ADP + H(+). The protein operates within isoprenoid biosynthesis; isopentenyl diphosphate biosynthesis via DXP pathway; isopentenyl diphosphate from 1-deoxy-D-xylulose 5-phosphate: step 3/6. Catalyzes the phosphorylation of the position 2 hydroxy group of 4-diphosphocytidyl-2C-methyl-D-erythritol. The sequence is that of 4-diphosphocytidyl-2-C-methyl-D-erythritol kinase from Prochlorococcus marinus (strain SARG / CCMP1375 / SS120).